A 75-amino-acid polypeptide reads, in one-letter code: Large ribosomal subunit protein bL31 (75 aa).

Residues Cys-16, Cys-18, Cys-37, and Cys-40 each contribute to the Zn(2+) site.

It belongs to the bacterial ribosomal protein bL31 family. Type A subfamily. In terms of assembly, part of the 50S ribosomal subunit. Requires Zn(2+) as cofactor.

Binds the 23S rRNA. This Legionella pneumophila (strain Paris) protein is Large ribosomal subunit protein bL31.